The primary structure comprises 398 residues: O-methyltransferase mpaG (398 aa).

Ser-144 provides a ligand contact to (4E,8E)-10-(4,6-dihydroxy-7-methyl-3-oxo-1,3-dihydro-2-benzofuran-5-yl)-4,8-dimethyldeca-4,8-dienoate. Ser-144 contacts 4-farnesyl-3,5-dihydroxy-6-methylphthalide. Ser-144 provides a ligand contact to 6-O-desmethylmycophenolate. Position 197 (Asn-197) interacts with S-adenosyl-L-homocysteine. Tyr-199 contributes to the (4E,8E)-10-(4,6-dihydroxy-7-methyl-3-oxo-1,3-dihydro-2-benzofuran-5-yl)-4,8-dimethyldeca-4,8-dienoate binding site. 4-farnesyl-3,5-dihydroxy-6-methylphthalide is bound at residue Tyr-199. Tyr-199 lines the 6-O-desmethylmycophenolate pocket. The S-adenosyl-L-homocysteine site is built by Tyr-203, Asp-237, Gly-239, His-244, Asp-245, Asp-264, and Arg-265. Residue Asp-264 coordinates S-adenosyl-L-methionine. (4E,8E)-10-(4,6-dihydroxy-7-methyl-3-oxo-1,3-dihydro-2-benzofuran-5-yl)-4,8-dimethyldeca-4,8-dienoate-binding residues include Arg-265 and Gln-267. Arg-265 serves as a coordination point for 6-O-desmethylmycophenolate. S-adenosyl-L-homocysteine contacts are provided by Asp-286, Ile-287, and His-302. Ser-303 contacts (4E,8E)-10-(4,6-dihydroxy-7-methyl-3-oxo-1,3-dihydro-2-benzofuran-5-yl)-4,8-dimethyldeca-4,8-dienoate. Ser-303 provides a ligand contact to 4-farnesyl-3,5-dihydroxy-6-methylphthalide. Ser-303 is a binding site for 6-O-desmethylmycophenolate. The active-site Proton acceptor is the His-306. Active-site residues include Glu-335 and Glu-362.

It belongs to the class I-like SAM-binding methyltransferase superfamily. Cation-independent O-methyltransferase family. COMT subfamily. In terms of assembly, homodimer.

It is found in the cytoplasm. It localises to the cytosol. The catalysed reaction is (4E,8E)-10-(4,6-dihydroxy-7-methyl-3-oxo-1,3-dihydro-2-benzofuran-5-yl)-4,8-dimethyldeca-4,8-dienoate + S-adenosyl-L-methionine = (4E,8E)-10-(4-hydroxy-6-methoxy-7-methyl-3-oxo-1,3-dihydro-2-benzofuran-5-yl)-4,8-dimethyldeca-4,8-dienoate + S-adenosyl-L-homocysteine + H(+). It carries out the reaction 4-farnesyl-3,5-dihydroxy-6-methylphthalide + S-adenosyl-L-methionine = 4-farnesyl-3,5-dihydroxy-6-methoxylphthalide + S-adenosyl-L-homocysteine + H(+). The enzyme catalyses 6-O-desmethylmycophenolate + S-adenosyl-L-methionine = mycophenolate + S-adenosyl-L-homocysteine + H(+). The protein operates within secondary metabolite biosynthesis; terpenoid biosynthesis. Its function is as follows. O-methyltransferase; part of the gene cluster that mediates the biosynthesis of mycophenolic acid (MPA), the first isolated antibiotic natural product in the world obtained from a culture of Penicillium brevicompactum in 1893. MpaG methylates farnesyl-DHMP-3C (FDHMP-3C) to yield MFDHMP-3C. The first step of the pathway is the synthesis of 5-methylorsellinic acid (5MOA) by the cytosolic polyketide synthase mpaC. 5MOA is then converted to the phthalide compound 5,7-dihydroxy-4,6-dimethylphthalide (DHMP) by the endoplasmic reticulum-bound cytochrome P450 monooxygenase mpaDE. MpaDE first catalyzes hydroxylation of 5-MOA to 4,6-dihydroxy-2-(hydroxymethyl)-3-methylbenzoic acid (DHMB). MpaDE then acts as a lactone synthase that catalyzes the ring closure to convert DHMB into DHMP. The next step is the prenylation of DHMP by the Golgi apparatus-associated prenyltransferase mpaA to yield farnesyl-DHMP (FDHMP). The ER-bound oxygenase mpaB then mediates the oxidative cleavage the C19-C20 double bond in FDHMP to yield FDHMP-3C via a mycophenolic aldehyde intermediate. The O-methyltransferase mpaG catalyzes the methylation of FDHMP-3C to yield MFDHMP-3C. MpaG and mpaB can also switch the order in which they act and, in this case, the conversion of FDHMP to MFDHMP-3C can take place via 5-O-methyl-FDHMP (MFDHMP). After the cytosolic methylation of FDHMP-3C, MFDHMP-3C enters into peroxisomes probably via free diffusion due to its low molecular weight. Upon a peroxisomal CoA ligation reaction, catalyzed by a beta-oxidation component enzyme acyl-CoA ligase ACL891, MFDHMP-3C-CoA would then be restricted to peroxisomes for the following beta-oxidation pathway steps. The peroxisomal beta-oxidation machinery than converts MFDHMP-3C-CoA into MPA_CoA, via a beta-oxidation chain-shortening process. Finally mpaH acts as a peroxisomal acyl-CoA hydrolase with high substrate specificity toward MPA-CoA to release the final product MPA. MpaH can also hydrolyze DMMPA-CoA to release demethylmycophenolic acid (DMMPA) that is further converted to MPA by mpaG. This is O-methyltransferase mpaG from Penicillium brevicompactum.